Consider the following 463-residue polypeptide: NADH dehydrogenase [ubiquinone] iron-sulfur protein 2, mitochondrial (463 aa).

A mitochondrion-targeting transit peptide spans 1–33; the sequence is MAALRALGGLRGVAAQVLRPGAGVRLPIQPSRG. Residue Lys-62 is modified to N6-acetyllysine. A Symmetric dimethylarginine modification is found at Arg-118. Cys-326, Cys-332, and Cys-347 together coordinate [4Fe-4S] cluster.

It belongs to the complex I 49 kDa subunit family. As to quaternary structure, core subunit of respiratory chain NADH dehydrogenase (Complex I) which is composed of 45 different subunits. Component of the iron-sulfur (IP) fragment of the enzyme. Interacts with NDUFAF3. Interacts with NDUFAF7. Interacts with CERS2. [4Fe-4S] cluster serves as cofactor. Post-translationally, dimethylation at Arg-118 by NDUFAF7 takes place after NDUFS2 assembles into the complex I, leading to stabilize the early intermediate complex.

It is found in the mitochondrion inner membrane. It carries out the reaction a ubiquinone + NADH + 5 H(+)(in) = a ubiquinol + NAD(+) + 4 H(+)(out). Functionally, core subunit of the mitochondrial membrane respiratory chain NADH dehydrogenase (Complex I) which catalyzes electron transfer from NADH through the respiratory chain, using ubiquinone as an electron acceptor. Essential for the catalytic activity and assembly of complex I. Redox-sensitive, critical component of the oxygen-sensing pathway in the pulmonary vasculature which plays a key role in acute pulmonary oxygen-sensing and hypoxic pulmonary vasoconstriction. Plays an important role in carotid body sensing of hypoxia. Essential for glia-like neural stem and progenitor cell proliferation, differentiation and subsequent oligodendrocyte or neuronal maturation. This Pongo pygmaeus (Bornean orangutan) protein is NADH dehydrogenase [ubiquinone] iron-sulfur protein 2, mitochondrial (NDUFS2).